A 404-amino-acid polypeptide reads, in one-letter code: AT-hook motif nuclear-localized protein 3 (404 aa).

Disordered stretches follow at residues 1-51 (MEER…VPPT), 70-100 (PFSL…PDGT), and 113-133 (SVPL…GKSN). Positions 7 to 19 (TNINNNITSSFGL) are enriched in polar residues. Over residues 35–51 (DPPPRPENPNPFLVPPT) the composition is skewed to pro residues. Residues 71-83 (FSLTMPTENTSAE) show a composition bias toward polar residues. Positions 86–94 (KKKRGRPRK) match the Bipartite nuclear localization signal motif. The segment at residues 86 to 98 (KKKRGRPRKYNPD) is a DNA-binding region (a.T hook). Residues 123-133 (RKRGRGRGKSN) show a composition bias toward basic residues. The PPC domain occupies 163–308 (GANFTPHVLI…RFGAQPSSIS (146 aa)). Positions 359 to 404 (PFSSIPVGGGGGGEVGEEEGEEDDDELEGEDEEFGGDSQSDNEIPS) are disordered. Residues 373-393 (VGEEEGEEDDDELEGEDEEFG) are compositionally biased toward acidic residues.

As to quaternary structure, homodimer. Interacts with AHL4. As to expression, expressed in both procambium and xylem precursors of the root meristem. Also detected in the endodermis in the late elongation zone and onwards.

Its subcellular location is the nucleus. Transcription factor that specifically binds AT-rich DNA sequences related to the nuclear matrix attachment regions (MARs). Acts redundantly with AHL4 to regulate the formation of tissue boundary between the xylem and procambium in the root meristem. This is AT-hook motif nuclear-localized protein 3 from Arabidopsis thaliana (Mouse-ear cress).